The chain runs to 427 residues: Glutamate-1-semialdehyde 2,1-aminomutase (427 aa).

N6-(pyridoxal phosphate)lysine is present on lysine 265.

The protein belongs to the class-III pyridoxal-phosphate-dependent aminotransferase family. HemL subfamily. Homodimer. It depends on pyridoxal 5'-phosphate as a cofactor.

Its subcellular location is the cytoplasm. The enzyme catalyses (S)-4-amino-5-oxopentanoate = 5-aminolevulinate. Its pathway is porphyrin-containing compound metabolism; protoporphyrin-IX biosynthesis; 5-aminolevulinate from L-glutamyl-tRNA(Glu): step 2/2. The polypeptide is Glutamate-1-semialdehyde 2,1-aminomutase (Bordetella parapertussis (strain 12822 / ATCC BAA-587 / NCTC 13253)).